Here is a 427-residue protein sequence, read N- to C-terminus: Inward rectifier potassium channel 2 (427 aa).

The Cytoplasmic portion of the chain corresponds to 1–81 (MGSVRTNRYS…IFTTCVDIRW (81 aa)). Cys76 is subject to S-nitrosocysteine. Residues 82 to 106 (RWMLVIFCLAFVLSWLFFGCVFWLI) form a helical membrane-spanning segment. Over 107 to 128 (ALLHGDLDASKEGKACVSEVNS) the chain is Extracellular. Positions 129–140 (FTAAFLFSIETQ) form an intramembrane region, helical; Pore-forming. The segment at residues 141–147 (TTIGYGF) is an intramembrane region (pore-forming). The short motif at 142 to 147 (TIGYGF) is the Selectivity filter element. Topologically, residues 148–156 (RCVTDECPI) are extracellular. The chain crosses the membrane as a helical span at residues 157-178 (AVFMVVFQSIVGCIIDAFIIGA). Residues 179–427 (VMAKMAKPKK…PRPLRRESEI (249 aa)) lie on the Cytoplasmic side of the membrane. Residues 181-208 (AKMAKPKKRNETLVFSHNAVIAMRDGKL) are polyphosphoinositide (PIP2)-binding. The interval 384 to 427 (SKEEDDSENGVPESTSTDTPPDIDLHNQASVPLEPRPLRRESEI) is disordered. The short motif at 425–427 (SEI) is the PDZ-binding element.

The protein belongs to the inward rectifier-type potassium channel (TC 1.A.2.1) family. KCNJ2 subfamily. As to quaternary structure, homotetramer. Homomultimeric and heteromultimeric association with KCNJ4/Kir2.3. Can form heteromeric channels with Kir2.6/KCNJ18. Associates, via its PDZ-recognition domain, with a complex containing LIN7A, LIN7B, LIN7C, DLG1, CASK and APBA1. Post-translationally, S-nitrosylation increases the open probability and inward rectifying currents.

It localises to the cell membrane. The protein resides in the sarcolemma. Its subcellular location is the T-tubule. The catalysed reaction is K(+)(in) = K(+)(out). Its activity is regulated as follows. Activated by phosphatidylinositol 4,5 biphosphate (PtdIns(4,5)P2). In terms of biological role, inward rectifier potassium channels are characterized by a greater tendency to allow potassium to flow into the cell rather than out of it. Their voltage dependence is regulated by the concentration of extracellular potassium; as external potassium is raised, the voltage range of the channel opening shifts to more positive voltages. The inward rectification is mainly due to the blockage of outward current by internal magnesium. Can be blocked by extracellular barium or cesium. Probably participates in establishing action potential waveform and excitability of neuronal and muscle tissues. The polypeptide is Inward rectifier potassium channel 2 (KCNJ2) (Macaca mulatta (Rhesus macaque)).